Here is a 319-residue protein sequence, read N- to C-terminus: Phenoxybenzoate dioxygenase subunit beta (319 aa).

Positions 7-109 (MAPVSLRIHA…DGPSNHFALD (103 aa)) constitute an FAD-binding FR-type domain. NAD(+) is bound at residue 113–223 (PHAVFIAGGI…PARVHLEYFA (111 aa)). Residues 234–319 (FVVHLARSGR…SKTAELTLDL (86 aa)) enclose the 2Fe-2S ferredoxin-type domain. Positions 268, 273, 276, and 306 each coordinate [2Fe-2S] cluster.

Belongs to the PDR/VanB family. In terms of assembly, this dioxygenase system consists of two proteins: the alpha subunit (PobA) and a subunit (PobB) that acts as a ferredoxin and a ferredoxin reductase. Requires FMN as cofactor.

It functions in the pathway aromatic compound metabolism; carboxydiphenyl ether degradation. Functionally, degrades exclusively diarylether compounds having carboxyl groups in the 3- or 4-position. Yields a hemiacetal that spontaneously hydrolyzes to phenol and protocatechuate. This is Phenoxybenzoate dioxygenase subunit beta (pobB) from Ectopseudomonas oleovorans (Pseudomonas oleovorans).